The primary structure comprises 467 residues: Phosphomethylpyrimidine synthase (467 aa).

Substrate contacts are provided by residues N80, M109, Y139, H175, 195–197 (SRG), 236–239 (DSLR), and E275. H279 is a binding site for Zn(2+). Y302 serves as a coordination point for substrate. Residue H343 participates in Zn(2+) binding. The [4Fe-4S] cluster site is built by C423, C426, and C431.

The protein belongs to the ThiC family. It depends on [4Fe-4S] cluster as a cofactor.

The enzyme catalyses 5-amino-1-(5-phospho-beta-D-ribosyl)imidazole + S-adenosyl-L-methionine = 4-amino-2-methyl-5-(phosphooxymethyl)pyrimidine + CO + 5'-deoxyadenosine + formate + L-methionine + 3 H(+). The protein operates within cofactor biosynthesis; thiamine diphosphate biosynthesis. Catalyzes the synthesis of the hydroxymethylpyrimidine phosphate (HMP-P) moiety of thiamine from aminoimidazole ribotide (AIR) in a radical S-adenosyl-L-methionine (SAM)-dependent reaction. This Synechococcus sp. (strain WH7803) protein is Phosphomethylpyrimidine synthase.